The following is a 190-amino-acid chain: Xanthine phosphoribosyltransferase (190 aa).

Xanthine-binding residues include Leu-20 and Asn-27. 129–133 (ASGSA) is a 5-phospho-alpha-D-ribose 1-diphosphate binding site. Lys-157 contributes to the xanthine binding site.

It belongs to the purine/pyrimidine phosphoribosyltransferase family. Xpt subfamily. As to quaternary structure, homodimer.

It is found in the cytoplasm. It carries out the reaction XMP + diphosphate = xanthine + 5-phospho-alpha-D-ribose 1-diphosphate. Its pathway is purine metabolism; XMP biosynthesis via salvage pathway; XMP from xanthine: step 1/1. Its function is as follows. Converts the preformed base xanthine, a product of nucleic acid breakdown, to xanthosine 5'-monophosphate (XMP), so it can be reused for RNA or DNA synthesis. The chain is Xanthine phosphoribosyltransferase from Clostridium tetani (strain Massachusetts / E88).